Consider the following 272-residue polypeptide: Putative pyruvate, phosphate dikinase regulatory protein (272 aa).

ADP is bound at residue 154–161 (GVSRTSKS).

Belongs to the pyruvate, phosphate/water dikinase regulatory protein family. PDRP subfamily.

The catalysed reaction is N(tele)-phospho-L-histidyl/L-threonyl-[pyruvate, phosphate dikinase] + ADP = N(tele)-phospho-L-histidyl/O-phospho-L-threonyl-[pyruvate, phosphate dikinase] + AMP + H(+). The enzyme catalyses N(tele)-phospho-L-histidyl/O-phospho-L-threonyl-[pyruvate, phosphate dikinase] + phosphate + H(+) = N(tele)-phospho-L-histidyl/L-threonyl-[pyruvate, phosphate dikinase] + diphosphate. Its function is as follows. Bifunctional serine/threonine kinase and phosphorylase involved in the regulation of the pyruvate, phosphate dikinase (PPDK) by catalyzing its phosphorylation/dephosphorylation. In Wolbachia pipientis subsp. Culex pipiens (strain wPip), this protein is Putative pyruvate, phosphate dikinase regulatory protein.